Here is a 108-residue protein sequence, read N- to C-terminus: UPF0060 membrane protein CJA_3703 (108 aa).

The next 4 membrane-spanning stretches (helical) occupy residues 6 to 26 (LLFV…YLWL), 31 to 51 (SIWL…LLTL), 61 to 81 (AAYG…VDGV), and 85 to 105 (AYDW…AMGW).

It belongs to the UPF0060 family.

Its subcellular location is the cell inner membrane. This is UPF0060 membrane protein CJA_3703 from Cellvibrio japonicus (strain Ueda107) (Pseudomonas fluorescens subsp. cellulosa).